The sequence spans 35 residues: Protein YbgU (35 aa).

This Escherichia coli (strain K12) protein is Protein YbgU.